The following is a 160-amino-acid chain: Cyclic pyranopterin monophosphate synthase (160 aa).

Residues 74–76 (LSH) and 112–113 (ME) each bind substrate. Residue D127 is part of the active site.

This sequence belongs to the MoaC family. In terms of assembly, homohexamer; trimer of dimers.

It catalyses the reaction (8S)-3',8-cyclo-7,8-dihydroguanosine 5'-triphosphate = cyclic pyranopterin phosphate + diphosphate. It participates in cofactor biosynthesis; molybdopterin biosynthesis. Functionally, catalyzes the conversion of (8S)-3',8-cyclo-7,8-dihydroguanosine 5'-triphosphate to cyclic pyranopterin monophosphate (cPMP). In Geobacter sulfurreducens (strain ATCC 51573 / DSM 12127 / PCA), this protein is Cyclic pyranopterin monophosphate synthase.